Here is a 961-residue protein sequence, read N- to C-terminus: Vinculin (961 aa).

Tandem repeats lie at residues 258–362 and 371–470. Residues 258 to 470 are 2 X repeats; that stretch reads ELDNLTVLKK…LTQKLYELKA (213 aa). Residues 720 to 778 are disordered; the sequence is AIAPPQPPPLPTSLPPPIPELSALHLSNQNAERAPPRPPLPREGLAPVRPPPPETDDED. Over residues 723–738 the composition is skewed to pro residues; sequence PPQPPPLPTSLPPPIP. Threonine 774 is modified (phosphothreonine).

This sequence belongs to the vinculin/alpha-catenin family. In terms of assembly, exhibits self-association properties.

Its subcellular location is the cytoplasm. It is found in the cytoskeleton. The protein localises to the cell junction. The protein resides in the adherens junction. It localises to the cell membrane. Its function is as follows. Involved in cell adhesion. May be involved in the attachment of the actin-based microfilaments to the plasma membrane. In Drosophila melanogaster (Fruit fly), this protein is Vinculin (Vinc).